Here is a 287-residue protein sequence, read N- to C-terminus: Carbon monoxide dehydrogenase medium chain (287 aa).

The region spanning 1 to 177 is the FAD-binding PCMH-type domain; the sequence is MIPPRFEYHA…VEIRVPAFAQ (177 aa). Residues 32-36 and 111-115 each bind FAD; these read AGGHS and TIGGD.

Dimer of heterotrimers. Each heterotrimer consists of a large, a medium and a small subunit. FAD serves as cofactor.

The catalysed reaction is CO + a quinone + H2O = a quinol + CO2. In terms of biological role, catalyzes the oxidation of carbon monoxide to carbon dioxide. In Hydrogenophaga pseudoflava (Pseudomonas carboxydoflava), this protein is Carbon monoxide dehydrogenase medium chain (cutM).